A 224-amino-acid chain; its full sequence is Redox-sensing transcriptional repressor Rex (224 aa).

The segment at residues 17–56 is a DNA-binding region (H-T-H motif); it reads RYHRYLEELLKNDVKRISSRELSEKMGVTASQIRQDLNNF. Position 91–96 (91–96) interacts with NAD(+); the sequence is GAGNLG.

Belongs to the transcriptional regulatory Rex family. As to quaternary structure, homodimer.

The protein resides in the cytoplasm. Functionally, modulates transcription in response to changes in cellular NADH/NAD(+) redox state. This chain is Redox-sensing transcriptional repressor Rex, found in Thermoanaerobacter pseudethanolicus (strain ATCC 33223 / 39E) (Clostridium thermohydrosulfuricum).